Reading from the N-terminus, the 1849-residue chain is Breast cancer type 1 susceptibility protein homolog (1849 aa).

Met-1 carries the post-translational modification N-acetylmethionine. The RING-type zinc finger occupies 24–65 (CPICLELIKEPVSTKCDHIFCKFCMLKLLNQKKGPSQCPLCK). A Phosphoserine modification is found at Ser-114. Residues Lys-301 and Lys-339 each participate in a glycyl lysine isopeptide (Lys-Gly) (interchain with G-Cter in SUMO2) cross-link. A phosphoserine mark is found at Ser-395, Ser-398, Ser-423, and Ser-434. Residues Lys-457 and Lys-517 each participate in a glycyl lysine isopeptide (Lys-Gly) (interchain with G-Cter in SUMO2) cross-link. Residues 530 to 542 (KMTEGTDQTEQKC) are compositionally biased toward basic and acidic residues. Disordered stretches follow at residues 530 to 558 (KMTE…KTKR) and 620 to 662 (ELEL…RQSQ). Phosphoserine is present on residues Ser-691, Ser-711, and Ser-720. Residues 882–912 (SGSLRDQSPRDPLKCRQKEDSQGKSESKSQH) form a disordered region. Residues 888–910 (QSPRDPLKCRQKEDSQGKSESKS) show a composition bias toward basic and acidic residues. Lys-981 participates in a covalent cross-link: Glycyl lysine isopeptide (Lys-Gly) (interchain with G-Cter in SUMO2). A Phosphoserine; by CHEK2 modification is found at Ser-982. Phosphoserine is present on Ser-1002. The segment covering 1036 to 1061 (NSVNEVGSSTNEVGSSVNEVGSSGEN) has biased composition (low complexity). The tract at residues 1036-1070 (NSVNEVGSSTNEVGSSVNEVGSSGENIQAEPGRNR) is disordered. Residue Lys-1073 forms a Glycyl lysine isopeptide (Lys-Gly) (interchain with G-Cter in SUMO2) linkage. A phosphoserine mark is found at Ser-1138, Ser-1184, Ser-1211, Ser-1212, Ser-1274, Ser-1323, Ser-1330, Ser-1336, and Ser-1382. The tract at residues 1172–1211 (FSESVQKGEFRGSPGPFTHTHLAQGHQRGAGKLESEETVS) is disordered. 3 disordered regions span residues 1321–1389 (YQSE…ILTT), 1412–1433 (VLER…DSRG), and 1452–1493 (SEKS…RSSA). The segment covering 1336 to 1360 (SDDEERETGLEEDSCQEEQSVDSDL) has biased composition (acidic residues). Composition is skewed to polar residues over residues 1370 to 1389 (ETSL…ILTT) and 1418 to 1429 (SQPSHSSASLTA). Thr-1389 carries the post-translational modification Phosphothreonine. The segment at 1392 to 1419 (RDTMQDNLLKLQQEMAELEAVLERHGSQ) is interaction with PALB2. 3 positions are modified to phosphoserine: Ser-1418, Ser-1452, and Ser-1518. Disordered regions lie at residues 1562 to 1590 (SLFS…PPSA) and 1621 to 1640 (REES…ERSK). Composition is skewed to basic and acidic residues over residues 1566–1582 (HEPE…EPAH) and 1621–1631 (REESMSKEKPE). BRCT domains follow at residues 1642–1729 (RLSM…DFEV) and 1749–1848 (RDKK…TYLV).

As to quaternary structure, heterodimer with BARD1. Part of the BRCA1-associated genome surveillance complex (BASC), which contains BRCA1, MSH2, MSH6, MLH1, ATM, BLM, PMS2 and the MRE11-RAD50-NBN protein (MRN) complex. This association could be a dynamic process changing throughout the cell cycle and within subnuclear domains. Component of the BRCA1-A complex, at least composed of BRCA1, BARD1, UIMC1/RAP80, ABRAXAS1, BRCC3/BRCC36, BABAM2 and BABAM1/NBA1. Interacts (via the BRCT domains) with ABRAXAS1 (phosphorylated form); this is important for recruitment to sites of DNA damage. Can form a heterotetramer with two molecules of ABRAXAS1 (phosphorylated form). Component of the BRCA1-RBBP8 complex. Interacts (via the BRCT domains) with RBBP8 ('Ser-327' phosphorylated form); the interaction ubiquitinates RBBP8, regulates CHEK1 activation, and involves RBBP8 in BRCA1-dependent G2/M checkpoint control on DNA damage. Associates with RNA polymerase II holoenzyme. Interacts with SMC1A, NELFB, DCLRE1C, CLSPN. CHEK1, CHEK2, BAP1, BRCC3, UBXN1 and PCLAF. Interacts (via BRCT domains) with BRIP1 (phosphorylated form). Interacts with FANCD2 (ubiquitinated form). Interacts with H2AX (phosphorylated on 'Ser-140'). Interacts (via the BRCT domains) with ACACA (phosphorylated form); the interaction prevents dephosphorylation of ACACA. Part of a BRCA complex containing BRCA1, BRCA2 and PALB2. Interacts directly with PALB2; the interaction is essential for its function in HRR. Interacts directly with BRCA2; the interaction occurs only in the presence of PALB2 which serves as the bridging protein. Interacts (via the BRCT domains) with LMO4; the interaction represses the transcriptional activity of BRCA1. Interacts (via the BRCT domains) with CCAR2 (via N-terminus); the interaction represses the transcriptional activator activity of BRCA1. Interacts with EXD2. Interacts (via C-terminus) with DHX9; this interaction is direct and links BRCA1 to the RNA polymerase II holoenzyme. Interacts with DNA helicase ZGRF1; the interaction is increased following DNA damage induction. Phosphorylated in response to IR, UV, and various stimuli that cause checkpoint activation, probably by ATM or ATR. Phosphorylation at Ser-982 by CHEK2 regulates mitotic spindle assembly. Phosphorylation by AURKA regulates centrosomal microtubule nucleation. In terms of processing, autoubiquitinated, undergoes 'Lys-6'-linked polyubiquitination. 'Lys-6'-linked polyubiquitination does not promote degradation.

Its subcellular location is the nucleus. The protein localises to the chromosome. It localises to the cytoplasm. It carries out the reaction S-ubiquitinyl-[E2 ubiquitin-conjugating enzyme]-L-cysteine + [acceptor protein]-L-lysine = [E2 ubiquitin-conjugating enzyme]-L-cysteine + N(6)-ubiquitinyl-[acceptor protein]-L-lysine.. Its pathway is protein modification; protein ubiquitination. Functionally, E3 ubiquitin-protein ligase that specifically mediates the formation of 'Lys-6'-linked polyubiquitin chains and plays a central role in DNA repair by facilitating cellular responses to DNA damage. It is unclear whether it also mediates the formation of other types of polyubiquitin chains. The BRCA1-BARD1 heterodimer coordinates a diverse range of cellular pathways such as DNA damage repair, ubiquitination and transcriptional regulation to maintain genomic stability. Regulates centrosomal microtubule nucleation. Required for appropriate cell cycle arrests after ionizing irradiation in both the S-phase and the G2 phase of the cell cycle. Required for FANCD2 targeting to sites of DNA damage. Inhibits lipid synthesis by binding to inactive phosphorylated ACACA and preventing its dephosphorylation. Contributes to homologous recombination repair (HRR) via its direct interaction with PALB2, fine-tunes recombinational repair partly through its modulatory role in the PALB2-dependent loading of BRCA2-RAD51 repair machinery at DNA breaks. Component of the BRCA1-RBBP8 complex which regulates CHEK1 activation and controls cell cycle G2/M checkpoints on DNA damage via BRCA1-mediated ubiquitination of RBBP8. Acts as a transcriptional activator. The polypeptide is Breast cancer type 1 susceptibility protein homolog (BRCA1) (Bos taurus (Bovine)).